A 271-amino-acid chain; its full sequence is NH(3)-dependent NAD(+) synthetase (271 aa).

Position 43–50 (43–50 (GISGGQDS)) interacts with ATP. Aspartate 49 contributes to the Mg(2+) binding site. Arginine 137 contacts deamido-NAD(+). Threonine 157 serves as a coordination point for ATP. Glutamate 162 contributes to the Mg(2+) binding site. Positions 170 and 177 each coordinate deamido-NAD(+). The ATP site is built by lysine 186 and threonine 208. 257–258 (HK) is a deamido-NAD(+) binding site.

It belongs to the NAD synthetase family. As to quaternary structure, homodimer.

The enzyme catalyses deamido-NAD(+) + NH4(+) + ATP = AMP + diphosphate + NAD(+) + H(+). It functions in the pathway cofactor biosynthesis; NAD(+) biosynthesis; NAD(+) from deamido-NAD(+) (ammonia route): step 1/1. Its function is as follows. Catalyzes the ATP-dependent amidation of deamido-NAD to form NAD. Uses ammonia as a nitrogen source. The sequence is that of NH(3)-dependent NAD(+) synthetase from Exiguobacterium sp. (strain ATCC BAA-1283 / AT1b).